The sequence spans 528 residues: Arginine--tRNA ligase (528 aa).

A 'HIGH' region motif is present at residues 112-122 (ANPTGPLHIGH).

The protein belongs to the class-I aminoacyl-tRNA synthetase family. As to quaternary structure, monomer.

It localises to the cytoplasm. It carries out the reaction tRNA(Arg) + L-arginine + ATP = L-arginyl-tRNA(Arg) + AMP + diphosphate. The protein is Arginine--tRNA ligase of Wolinella succinogenes (strain ATCC 29543 / DSM 1740 / CCUG 13145 / JCM 31913 / LMG 7466 / NCTC 11488 / FDC 602W) (Vibrio succinogenes).